We begin with the raw amino-acid sequence, 832 residues long: Armadillo segment polarity protein (832 aa).

Polar residues predominate over residues 1–20 (MSYQMPQNRTMSHNPYNSSD). Residues 1-24 (MSYQMPQNRTMSHNPYNSSDMPMP) are disordered. ARM repeat units lie at residues 146-185 (NYQD…QLSK), 188-228 (ASRH…NLSH), 230-269 (RQGL…NLLL), 272-311 (DGSK…ILAY), 356-395 (SSNK…NLSD), 397-434 (ATKV…NLTC), 483-524 (SESA…NLAL), 594-634 (ELNR…ELAV), and 636-675 (KEVA…KMSE). The disordered stretch occupies residues 721–832 (AYEGLYGQGP…QVAAWYDTDL (112 aa)). Positions 767 to 777 (PAGSNPNAGNN) are enriched in low complexity.

The protein belongs to the beta-catenin family.

It is found in the cytoplasm. Its subcellular location is the cell membrane. The protein resides in the cell junction. The protein localises to the adherens junction. Functionally, may associate with CadN and participate in the transmission of developmental information. Can associate with alpha-catenin. Accumulates through wg signaling; arm function in wg signal transduction is required early in development for determination of neuroblast fate. Arm and Abl proteins function cooperatively at adherens junctions in both the CNS and epidermis. The sequence is that of Armadillo segment polarity protein from Aedes aegypti (Yellowfever mosquito).